The sequence spans 296 residues: Methylsterol monooxygenase erg25B (296 aa).

The next 3 helical transmembrane spans lie at 50–70 (IMSF…WILI), 98–118 (FVLL…HPMA), and 125–145 (TSVP…FFVL). In terms of domain architecture, Fatty acid hydroxylase spans 140-276 (AIFFVLEDTW…FRWWDYLLDT (137 aa)). A Histidine box-1 motif is present at residues 154–158 (HRALH). The short motif at 167 to 171 (HKIHH) is the Histidine box-2 element. The helical transmembrane segment at 201–221 (ILWCALTGDLHIFTMYVWIVL) threads the bilayer. Residues 251-257 (HHDLHHE) carry the Histidine box-3 motif.

The protein belongs to the sterol desaturase family. Fe cation is required as a cofactor.

The protein resides in the endoplasmic reticulum membrane. It participates in steroid metabolism; ergosterol biosynthesis. Sterol-C4-methyl oxidase; part of the third module of ergosterol biosynthesis pathway that includes the late steps of the pathway. Erg25B is a catalytic component of the C-4 demethylation complex that catalyzes the conversion of 4,4-dimethylfecosterol into fecosterol via 4-methylfecosterol. The third module or late pathway involves the ergosterol synthesis itself through consecutive reactions that mainly occur in the endoplasmic reticulum (ER) membrane. Firstly, the squalene synthase erg9 catalyzes the condensation of 2 farnesyl pyrophosphate moieties to form squalene, which is the precursor of all steroids. Squalene synthase is crucial for balancing the incorporation of farnesyl diphosphate (FPP) into sterol and nonsterol isoprene synthesis. Secondly, squalene is converted into lanosterol by the consecutive action of the squalene epoxidase erg1 and the lanosterol synthase erg7. Then, the delta(24)-sterol C-methyltransferase erg6 methylates lanosterol at C-24 to produce eburicol. Eburicol is the substrate of the sterol 14-alpha demethylase encoded by cyp51A and cyp51B, to yield 4,4,24-trimethyl ergosta-8,14,24(28)-trienol. The C-14 reductase erg24 then reduces the C14=C15 double bond which leads to 4,4-dimethylfecosterol. A sequence of further demethylations at C-4, involving the C-4 demethylation complex containing the C-4 methylsterol oxidases erg25A or erg25B, the sterol-4-alpha-carboxylate 3-dehydrogenase erg26 and the 3-keto-steroid reductase erg27, leads to the production of fecosterol via 4-methylfecosterol. The C-8 sterol isomerase erg2 then catalyzes the reaction which results in unsaturation at C-7 in the B ring of sterols and thus converts fecosterol to episterol. The sterol-C5-desaturase erg3B then catalyzes the introduction of a C-5 double bond in the B ring to produce 5-dehydroepisterol. The 2 other sterol-C5-desaturases, erg3A and erg3C, seem to be less important in ergosterol biosynthesis. The C-22 sterol desaturase erg5 further converts 5-dehydroepisterol into ergosta-5,7,22,24(28)-tetraen-3beta-ol by forming the C-22(23) double bond in the sterol side chain. Finally, ergosta-5,7,22,24(28)-tetraen-3beta-ol is substrate of the C-24(28) sterol reductases erg4A and erg4B to produce ergosterol. Possible alternative sterol biosynthetic pathways might exist from fecosterol to ergosterol, depending on the activities of the erg3 isoforms. The polypeptide is Methylsterol monooxygenase erg25B (Aspergillus fumigatus (strain ATCC MYA-4609 / CBS 101355 / FGSC A1100 / Af293) (Neosartorya fumigata)).